Consider the following 671-residue polypeptide: DNA ligase (671 aa).

NAD(+)-binding positions include 32–36, 81–82, and glutamate 113; these read DAEYD and SL. Catalysis depends on lysine 115, which acts as the N6-AMP-lysine intermediate. 4 residues coordinate NAD(+): arginine 136, glutamate 173, lysine 290, and lysine 314. 4 residues coordinate Zn(2+): cysteine 408, cysteine 411, cysteine 426, and cysteine 432. One can recognise a BRCT domain in the interval 593 to 671; that stretch reads EIDSPFAGKT…EAEMIRLLGA (79 aa).

Belongs to the NAD-dependent DNA ligase family. LigA subfamily. Mg(2+) serves as cofactor. Mn(2+) is required as a cofactor.

It carries out the reaction NAD(+) + (deoxyribonucleotide)n-3'-hydroxyl + 5'-phospho-(deoxyribonucleotide)m = (deoxyribonucleotide)n+m + AMP + beta-nicotinamide D-nucleotide.. In terms of biological role, DNA ligase that catalyzes the formation of phosphodiester linkages between 5'-phosphoryl and 3'-hydroxyl groups in double-stranded DNA using NAD as a coenzyme and as the energy source for the reaction. It is essential for DNA replication and repair of damaged DNA. The polypeptide is DNA ligase (Salmonella dublin (strain CT_02021853)).